Consider the following 208-residue polypeptide: Guanylate kinase (208 aa).

The Guanylate kinase-like domain occupies glycine 4–arginine 184. An ATP-binding site is contributed by alanine 11 to serine 18.

It belongs to the guanylate kinase family.

Its subcellular location is the cytoplasm. It catalyses the reaction GMP + ATP = GDP + ADP. Functionally, essential for recycling GMP and indirectly, cGMP. This Photobacterium profundum (strain SS9) protein is Guanylate kinase.